Here is a 379-residue protein sequence, read N- to C-terminus: Endonuclease III homolog 1, chloroplastic (379 aa).

A chloroplast-targeting transit peptide spans 1–54; sequence MILLVNGGAATSIHPNAARFYRIGTMSRQIHGAVSSSKHISLKTQHPLSDSNSE. A HhH domain is found at 244-272; sequence KYDGDIPSSLDDLLSLPGIGPKMAHLILH. The Nucleophile; for N-glycosylase activity role is filled by Lys265. Positions 340, 347, 350, and 356 each coordinate [4Fe-4S] cluster.

It belongs to the Nth/MutY family. The cofactor is [4Fe-4S] cluster. As to expression, expressed at low levels in roots, stems, leaves and flowers.

It localises to the plastid. Its subcellular location is the chloroplast stroma. The protein localises to the chloroplast nucleoid. It carries out the reaction 2'-deoxyribonucleotide-(2'-deoxyribose 5'-phosphate)-2'-deoxyribonucleotide-DNA = a 3'-end 2'-deoxyribonucleotide-(2,3-dehydro-2,3-deoxyribose 5'-phosphate)-DNA + a 5'-end 5'-phospho-2'-deoxyribonucleoside-DNA + H(+). Its function is as follows. Bifunctional DNA N-glycosylase with associated apurinic/apyrimidinic (AP) lyase function that catalyzes the first step in base excision repair (BER), the primary repair pathway for the repair of oxidative DNA damage. The DNA N-glycosylase activity releases the damaged DNA base from DNA by cleaving the N-glycosidic bond, leaving an AP site. The AP lyase activity cleaves the phosphodiester bond 3' to the AP site by a beta-elimination. Primarily recognizes and repairs oxidative base damage of pyrimidines. This chain is Endonuclease III homolog 1, chloroplastic, found in Arabidopsis thaliana (Mouse-ear cress).